Consider the following 159-residue polypeptide: Phosphopantetheine adenylyltransferase (159 aa).

T10 contributes to the substrate binding site. ATP contacts are provided by residues 10–11 and H18; that span reads TF. Substrate-binding residues include K42, L74, and R88. Residues 89–91, E99, and 124–130 contribute to the ATP site; these read GLR and FAYVSSS.

It belongs to the bacterial CoaD family. In terms of assembly, homohexamer. Mg(2+) is required as a cofactor.

It is found in the cytoplasm. It carries out the reaction (R)-4'-phosphopantetheine + ATP + H(+) = 3'-dephospho-CoA + diphosphate. The protein operates within cofactor biosynthesis; coenzyme A biosynthesis; CoA from (R)-pantothenate: step 4/5. Functionally, reversibly transfers an adenylyl group from ATP to 4'-phosphopantetheine, yielding dephospho-CoA (dPCoA) and pyrophosphate. This Thioalkalivibrio sulfidiphilus (strain HL-EbGR7) protein is Phosphopantetheine adenylyltransferase.